The following is a 328-amino-acid chain: Ferredoxin--NADP reductase 2 (328 aa).

FAD contacts are provided by T16, E35, Q43, Y48, I88, F123, D284, and T325.

This sequence belongs to the ferredoxin--NADP reductase type 2 family. In terms of assembly, homodimer. FAD serves as cofactor.

The enzyme catalyses 2 reduced [2Fe-2S]-[ferredoxin] + NADP(+) + H(+) = 2 oxidized [2Fe-2S]-[ferredoxin] + NADPH. This is Ferredoxin--NADP reductase 2 from Oceanobacillus iheyensis (strain DSM 14371 / CIP 107618 / JCM 11309 / KCTC 3954 / HTE831).